Consider the following 1025-residue polypeptide: Multidrug resistance protein MdtC (1025 aa).

12 helical membrane passes run 3–23 (FFAL…AITL), 333–353 (EVEQ…FLFL), 360–380 (IIPA…MYLC), 387–407 (LSLM…IVVL), 431–451 (VGFT…PLLL), 463–483 (FAVT…TLTP), 528–548 (LVGA…ISIP), 853–873 (VILI…LYES), 875–895 (VHPL…LLAL), 897–917 (LFNA…IGIV), 953–973 (PIMM…LSGG), and 984–1004 (ITIV…TPVV).

This sequence belongs to the resistance-nodulation-cell division (RND) (TC 2.A.6) family. MdtC subfamily. Part of a tripartite efflux system composed of MdtA, MdtB and MdtC. MdtC forms a heteromultimer with MdtB.

It localises to the cell inner membrane. The MdtABC tripartite complex confers resistance against novobiocin and deoxycholate. The polypeptide is Multidrug resistance protein MdtC (Escherichia coli O81 (strain ED1a)).